Reading from the N-terminus, the 415-residue chain is MTTVVREAFENHVKLVESRNSPGHVLASSEASFFVADLNDVVRKWAAWKEALPDVTPFFAVKSSYDRRLIQTLATCGAGFDCASTEEIELILSLGIGAERIIFTHPCKPVSSLGLCRKLGITLITFDNECELRKLHHHYPEAQTVLRVFADDPTNADPLGTKFGAARDDFDGLVRLVKELNMQLAGASFHAAPSVAVDAAAYVRGIRDTAEVFARARQVGLNPTVLDIGGGYTDSTFQQIAGAVRPAIAECFKSEVGEGRLRILAEPGTLFSCSPFYLAVKVVARRVNATAFGHEPATRLYINDGIYSNFMMRFIVNMTFSPAAVIREGVWHDQADHTMRGEACSLWGRSCDSNDCINRDCRLGPEVRVGDWLVFKDMGAYTTVCNTTFNGFTSSNHTIYLEPGTHPSRRSPVDL.

Lysine 62 carries the post-translational modification N6-(pyridoxal phosphate)lysine. Residues serine 194, glycine 231, and 266–269 (EPGT) each bind pyridoxal 5'-phosphate. A substrate-binding site is contributed by 315–316 (IV). Cysteine 351 (proton donor; shared with dimeric partner) is an active-site residue. Cysteine 351 bears the S-nitrosocysteine mark. Aspartate 352 provides a ligand contact to substrate. Tyrosine 381 contacts pyridoxal 5'-phosphate.

This sequence belongs to the Orn/Lys/Arg decarboxylase class-II family. In terms of assembly, homodimer. Pyridoxal 5'-phosphate serves as cofactor.

The protein operates within alkaloid biosynthesis. Amino acid decarboxylase; part of the gene cluster that mediates the biosynthesis of loline alkaloids, potent insecticidal agents composed of a pyrrolizidine ring system and an uncommon ether bridge linking carbons 2 and 7. Lolines are structurally differentiated by the various modifications of the L-amino group and include norloline, loline, N-methylloline, N-acetylloline, N-acetylnorloline, and N-formylloline. The first committed step is the condensation of O-acetyl-L-homoserine (derived from L-aspartic acid) and L-proline, probably catalyzed by the gamma-type pyridoxal 5'-phosphate(PLP)-dependent enzyme lolC, to give the diamino diacid, NACPP. Ensuing cyclization, decarboxylation, and acetylation steps yield 1-exo-acetamidopyrrolizidine (AcAP). LolO is required for installation of the ether bridge upon the pathway intermediate, 1-exo-acetamidopyrrolizidine (AcAP). In sequential 2-oxoglutarate- and O(2)-consuming steps, lolO removes hydrogens from C2 and C7 of AcAP to form both carbon-oxygen bonds in N-acetylnorloline (NANL), the precursor to all other lolines. The enzymes lolD, lolE, lolF and lolT have also been proposed to be involved in the ether-bridge installation. Further processing of the exocyclic moiety of NANL by fungal N-acetamidase (LolN), methyltransferase (LolM), and cytochrome P450 (LolP) enzymes, with occasional involvement of a plant acetyltransferase, generates the other known lolines. LolN transforms NANL to norlonine which is monomethylated and dimethylated to respectively lonine and N-methyllonine (NML) by lolM. LolP catalyzes hydroxylation of the methyl group in N-methylloline (NML) and further oxygenation to N-formylloline (NFL). A plant acetyltransferase is responsible for the acetylation of loline to form N-acetylloline (NAL). LolA might interact with aspartate kinase to prevent feedback inhibition of its activity by these end products and thereby promote production of L-homoserine from L-aspartate. This Epichloe uncinata (Endophyte fungus) protein is Amino acid decarboxylase lolD2.